The chain runs to 360 residues: Phosphoserine aminotransferase (360 aa).

Residue Arg42 coordinates L-glutamate. Residues Trp102, Thr152, Asp171, and Gln194 each coordinate pyridoxal 5'-phosphate. Lys195 carries the post-translational modification N6-(pyridoxal phosphate)lysine. 237 to 238 (NT) contributes to the pyridoxal 5'-phosphate binding site.

It belongs to the class-V pyridoxal-phosphate-dependent aminotransferase family. SerC subfamily. In terms of assembly, homodimer. Requires pyridoxal 5'-phosphate as cofactor.

It is found in the cytoplasm. It catalyses the reaction O-phospho-L-serine + 2-oxoglutarate = 3-phosphooxypyruvate + L-glutamate. The catalysed reaction is 4-(phosphooxy)-L-threonine + 2-oxoglutarate = (R)-3-hydroxy-2-oxo-4-phosphooxybutanoate + L-glutamate. The protein operates within amino-acid biosynthesis; L-serine biosynthesis; L-serine from 3-phospho-D-glycerate: step 2/3. Its pathway is cofactor biosynthesis; pyridoxine 5'-phosphate biosynthesis; pyridoxine 5'-phosphate from D-erythrose 4-phosphate: step 3/5. In terms of biological role, catalyzes the reversible conversion of 3-phosphohydroxypyruvate to phosphoserine and of 3-hydroxy-2-oxo-4-phosphonooxybutanoate to phosphohydroxythreonine. This chain is Phosphoserine aminotransferase, found in Coxiella burnetii (strain RSA 331 / Henzerling II).